The sequence spans 353 residues: Photosystem II D2 protein (353 aa).

An N-acetylthreonine modification is found at threonine 2. Position 2 is a phosphothreonine (threonine 2). A helical transmembrane segment spans residues 41–61 (CAYFALGGWFTGTTFVTSWYT). A chlorophyll a-binding site is contributed by histidine 118. Residues 125–141 (GFMLRQFELARSVQLRP) form a helical membrane-spanning segment. Pheophytin a contacts are provided by glutamine 130 and asparagine 143. The helical transmembrane segment at 153–166 (VFVSVSLIYPLGQA) threads the bilayer. Position 198 (histidine 198) interacts with chlorophyll a. Residues 208–228 (AALLCAIHGATVENTLFEDGD) traverse the membrane as a helical segment. A plastoquinone is bound by residues histidine 215 and phenylalanine 262. Histidine 215 is a binding site for Fe cation. A Fe cation-binding site is contributed by histidine 269. Residues 279–295 (GLWMSAIGVVGLALNLR) form a helical membrane-spanning segment.

This sequence belongs to the reaction center PufL/M/PsbA/D family. PSII is composed of 1 copy each of membrane proteins PsbA, PsbB, PsbC, PsbD, PsbE, PsbF, PsbH, PsbI, PsbJ, PsbK, PsbL, PsbM, PsbT, PsbX, PsbY, PsbZ, Psb30/Ycf12, at least 3 peripheral proteins of the oxygen-evolving complex and a large number of cofactors. It forms dimeric complexes. The D1/D2 heterodimer binds P680, chlorophylls that are the primary electron donor of PSII, and subsequent electron acceptors. It shares a non-heme iron and each subunit binds pheophytin, quinone, additional chlorophylls, carotenoids and lipids. There is also a Cl(-1) ion associated with D1 and D2, which is required for oxygen evolution. The PSII complex binds additional chlorophylls, carotenoids and specific lipids. serves as cofactor.

Its subcellular location is the plastid. The protein resides in the chloroplast thylakoid membrane. It catalyses the reaction 2 a plastoquinone + 4 hnu + 2 H2O = 2 a plastoquinol + O2. In terms of biological role, photosystem II (PSII) is a light-driven water:plastoquinone oxidoreductase that uses light energy to abstract electrons from H(2)O, generating O(2) and a proton gradient subsequently used for ATP formation. It consists of a core antenna complex that captures photons, and an electron transfer chain that converts photonic excitation into a charge separation. The D1/D2 (PsbA/PsbD) reaction center heterodimer binds P680, the primary electron donor of PSII as well as several subsequent electron acceptors. D2 is needed for assembly of a stable PSII complex. The polypeptide is Photosystem II D2 protein (Angiopteris evecta (Mule's foot fern)).